The following is a 565-amino-acid chain: Maturase K (565 aa).

It belongs to the intron maturase 2 family. MatK subfamily.

The protein localises to the plastid. It is found in the chloroplast. Functionally, usually encoded in the trnK tRNA gene intron. Probably assists in splicing its own and other chloroplast group II introns. This Staurastrum punctulatum (Green alga) protein is Maturase K.